Consider the following 459-residue polypeptide: Transcriptional coactivator YAP1 (459 aa).

4 positions are modified to phosphoserine; by LATS1 and LATS2: Ser-21, Ser-69, Ser-87, and Ser-119. 2 disordered regions span residues 51–88 and 103–129; these read LPDS…AHSS and SGMA…VPLP. WW domains follow at residues 126 to 159 and 186 to 219; these read VPLP…DPRK and GPLP…DPRL. 2 disordered regions span residues 231 to 254 and 307 to 364; these read TQSA…MGGN and PTSM…SSYS. The segment at 247–459 is transactivation domain; that stretch reads HGGVMGGNNQ…IDKESFLTWL (213 aa). 2 stretches are compositionally biased toward polar residues: residues 307–347 and 355–364; these read PTSM…SGTY and DSGLSMSSYS.

Belongs to the YAP1 family. In terms of processing, phosphorylated by lats1 and lats2; leading to cytoplasmic translocation and inactivation. Ubiquitously expressed throughout development.

Its subcellular location is the cytoplasm. It localises to the nucleus. The protein resides in the cell junction. The protein localises to the tight junction. It is found in the cell membrane. Its function is as follows. Transcriptional regulator which can act both as a coactivator and a corepressor and is the critical downstream regulatory target in the Hippo signaling pathway that plays a pivotal role in organ size control and tumor suppression by restricting proliferation and promoting apoptosis. Plays a key role in tissue tension and 3D tissue shape by regulating cortical actomyosin network formation. The chain is Transcriptional coactivator YAP1 from Oryzias latipes (Japanese rice fish).